A 481-amino-acid chain; its full sequence is Halobacterial transducer protein 9 (481 aa).

Residues 10–81 form the PAS domain; sequence SPFTVPLLLN…NKVADTPIDA (72 aa). One can recognise a Methyl-accepting transducer domain in the interval 208-444; sequence DVERLEAASQ…EIAAMVDETA (237 aa).

The protein belongs to the methyl-accepting chemotaxis (MCP) protein family.

Its subcellular location is the cytoplasm. Functionally, potentially involved in chemo- or phototactic signal transduction. The protein is Halobacterial transducer protein 9 (htr9) of Halobacterium salinarum (strain ATCC 700922 / JCM 11081 / NRC-1) (Halobacterium halobium).